The chain runs to 65 residues: Large ribosomal subunit protein bL32 (65 aa).

The span at 1 to 19 (MAVQKSRKTPSKRGMRRSH) shows a compositional bias: basic residues. The tract at residues 1 to 32 (MAVQKSRKTPSKRGMRRSHNALTNPTLSEDQE) is disordered.

Belongs to the bacterial ribosomal protein bL32 family.

The chain is Large ribosomal subunit protein bL32 from Ruthia magnifica subsp. Calyptogena magnifica.